The sequence spans 764 residues: Reticulon-1 (764 aa).

Disordered stretches follow at residues methionine 1–leucine 37, proline 115–glutamate 147, leucine 247–glutamate 400, and glutamate 455–methionine 475. Positions valine 261–glycine 282 are enriched in polar residues. Over residues glutamate 328–glutamate 337 the composition is skewed to basic and acidic residues. Residues alanine 578 to glutamate 764 enclose the Reticulon domain. 2 consecutive transmembrane segments (helical) span residues phenylalanine 607–phenylalanine 627 and valine 696–methionine 716.

The protein localises to the endoplasmic reticulum membrane. It is found in the nucleus. Functionally, inhibits amyloid precursor protein processing, probably by blocking BACE1 activity. The protein is Reticulon-1 of Xenopus tropicalis (Western clawed frog).